The following is a 310-amino-acid chain: Beta-lactamase AST-1 (310 aa).

The signal sequence occupies residues 1-31; that stretch reads MTFSALPFRRADRRRLLAAALAACALTLTAA. A lipid anchor (N-palmitoyl cysteine) is attached at Cys-32. A lipid anchor (S-diacylglycerol cysteine) is attached at Cys-32. The active-site Acyl-ester intermediate is Ser-91. Ser-151 serves as a coordination point for substrate. Residue Glu-187 is the Proton acceptor of the active site. 255-257 contacts substrate; the sequence is KTG.

Belongs to the class-A beta-lactamase family.

It localises to the cell membrane. It catalyses the reaction a beta-lactam + H2O = a substituted beta-amino acid. With respect to regulation, inhibited by clavulanic acid. In terms of biological role, confers high levels of resistance to amoxicillin, benzylpenicillin, piperacillin, ticarcillin and cephalothin. Not active against ceftazidime, cefotaxime and aztreonam. In Nocardia asteroides, this protein is Beta-lactamase AST-1 (bla).